The chain runs to 408 residues: Chaperonin GroEL (408 aa).

ATP-binding positions include 30–33 (TLGP), lysine 51, and 87–91 (DGTTT).

It belongs to the chaperonin (HSP60) family. As to quaternary structure, forms a cylinder of 14 subunits composed of two heptameric rings stacked back-to-back. Interacts with the co-chaperonin GroES.

The protein resides in the cytoplasm. The enzyme catalyses ATP + H2O + a folded polypeptide = ADP + phosphate + an unfolded polypeptide.. Together with its co-chaperonin GroES, plays an essential role in assisting protein folding. The GroEL-GroES system forms a nano-cage that allows encapsulation of the non-native substrate proteins and provides a physical environment optimized to promote and accelerate protein folding. The chain is Chaperonin GroEL from Rickettsia rickettsii.